The chain runs to 288 residues: Shikimate dehydrogenase (NADP(+)) (288 aa).

Shikimate is bound by residues 21 to 23 and T68; that span reads SLS. K72 functions as the Proton acceptor in the catalytic mechanism. Shikimate contacts are provided by N93 and D108. NADP(+) is bound by residues 132-136 and L230; that span reads GNGGA. Position 232 (Y232) interacts with shikimate. G253 is a binding site for NADP(+).

It belongs to the shikimate dehydrogenase family. As to quaternary structure, homodimer.

The enzyme catalyses shikimate + NADP(+) = 3-dehydroshikimate + NADPH + H(+). It functions in the pathway metabolic intermediate biosynthesis; chorismate biosynthesis; chorismate from D-erythrose 4-phosphate and phosphoenolpyruvate: step 4/7. Involved in the biosynthesis of the chorismate, which leads to the biosynthesis of aromatic amino acids. Catalyzes the reversible NADPH linked reduction of 3-dehydroshikimate (DHSA) to yield shikimate (SA). This is Shikimate dehydrogenase (NADP(+)) from Crocosphaera subtropica (strain ATCC 51142 / BH68) (Cyanothece sp. (strain ATCC 51142)).